The sequence spans 160 residues: Putative antiporter subunit mnhE2 (160 aa).

Helical transmembrane passes span 23 to 43, 55 to 75, and 100 to 120; these read FKFT…YILH, IWVA…SSIS, and SNWA…STVI.

This sequence belongs to the CPA3 antiporters (TC 2.A.63) subunit E family. May form a heterooligomeric complex that consists of seven subunits: mnhA2, mnhB2, mnhC2, mnhD2, mnhE2, mnhF2 and mnhG2.

It is found in the cell membrane. The polypeptide is Putative antiporter subunit mnhE2 (mnhE2) (Staphylococcus epidermidis (strain ATCC 35984 / DSM 28319 / BCRC 17069 / CCUG 31568 / BM 3577 / RP62A)).